Reading from the N-terminus, the 141-residue chain is Large ribosomal subunit protein uL11 (141 aa).

This sequence belongs to the universal ribosomal protein uL11 family. Part of the ribosomal stalk of the 50S ribosomal subunit. Interacts with L10 and the large rRNA to form the base of the stalk. L10 forms an elongated spine to which L12 dimers bind in a sequential fashion forming a multimeric L10(L12)X complex. In terms of processing, one or more lysine residues are methylated.

Forms part of the ribosomal stalk which helps the ribosome interact with GTP-bound translation factors. The sequence is that of Large ribosomal subunit protein uL11 from Brevibacillus brevis (strain 47 / JCM 6285 / NBRC 100599).